Reading from the N-terminus, the 261-residue chain is Tryptophan synthase alpha chain (261 aa).

Active-site proton acceptor residues include E47 and D58.

Belongs to the TrpA family. In terms of assembly, tetramer of two alpha and two beta chains.

The catalysed reaction is (1S,2R)-1-C-(indol-3-yl)glycerol 3-phosphate + L-serine = D-glyceraldehyde 3-phosphate + L-tryptophan + H2O. Its pathway is amino-acid biosynthesis; L-tryptophan biosynthesis; L-tryptophan from chorismate: step 5/5. Functionally, the alpha subunit is responsible for the aldol cleavage of indoleglycerol phosphate to indole and glyceraldehyde 3-phosphate. This chain is Tryptophan synthase alpha chain, found in Neisseria meningitidis serogroup A / serotype 4A (strain DSM 15465 / Z2491).